The chain runs to 417 residues: Mitochondrial tRNA-specific 2-thiouridylase 1 (417 aa).

Residues 32 to 39 and Met58 contribute to the ATP site; that span reads AMSSGVDS. An interaction with target base in tRNA region spans residues 122–124; it reads NPD. Catalysis depends on Cys127, which acts as the Nucleophile. A disulfide bond links Cys127 and Cys229. Gly154 provides a ligand contact to ATP. The tract at residues 179 to 181 is interaction with tRNA; that stretch reads KDQ. Residue Cys229 is the Cysteine persulfide intermediate of the active site. Positions 354–355 are interaction with tRNA; that stretch reads RS.

The protein belongs to the MnmA/TRMU family.

The protein localises to the mitochondrion. It catalyses the reaction 5-taurinomethyluridine(34) in tRNA + S-sulfanyl-L-cysteinyl-[protein] + AH2 + ATP = 5-taurinomethyl-2-thiouridine(34) in tRNA + L-cysteinyl-[protein] + A + AMP + diphosphate + H(+). In terms of biological role, catalyzes the 2-thiolation of uridine at the wobble position (U34) of mitochondrial tRNA(Lys), tRNA(Glu) and tRNA(Gln). Required for the formation of 5-taurinomethyl-2-thiouridine (tm5s2U) of mitochondrial tRNA(Lys), tRNA(Glu), and tRNA(Gln) at the wobble position. ATP is required to activate the C2 atom of the wobble base. This chain is Mitochondrial tRNA-specific 2-thiouridylase 1 (SLM3), found in Saccharomyces cerevisiae (strain ATCC 204508 / S288c) (Baker's yeast).